A 160-amino-acid polypeptide reads, in one-letter code: Deoxyuridine 5'-triphosphate nucleotidohydrolase (160 aa).

Substrate contacts are provided by residues 76 to 78 (RSG), Asn-89, and 93 to 95 (TID). The segment covering 139 to 149 (HTLSDTERGED) has biased composition (basic and acidic residues). The segment at 139–160 (HTLSDTERGEDGFGSTGHGSHQ) is disordered. The segment covering 150-160 (GFGSTGHGSHQ) has biased composition (gly residues).

The protein belongs to the dUTPase family. Mg(2+) is required as a cofactor.

The enzyme catalyses dUTP + H2O = dUMP + diphosphate + H(+). The protein operates within pyrimidine metabolism; dUMP biosynthesis; dUMP from dCTP (dUTP route): step 2/2. In terms of biological role, this enzyme is involved in nucleotide metabolism: it produces dUMP, the immediate precursor of thymidine nucleotides and it decreases the intracellular concentration of dUTP so that uracil cannot be incorporated into DNA. The chain is Deoxyuridine 5'-triphosphate nucleotidohydrolase from Beijerinckia indica subsp. indica (strain ATCC 9039 / DSM 1715 / NCIMB 8712).